The following is a 62-amino-acid chain: Single-pass membrane and coiled-coil domain-containing protein 4 homolog (62 aa).

A disordered region spans residues 1–27; it reads MRQLPGKAAKETRKMKRERKQQNKEGH. The stretch at 9-31 forms a coiled coil; it reads AKETRKMKRERKQQNKEGHNRVV. The helical transmembrane segment at 30 to 50 threads the bilayer; it reads VVTVAIPVCLAVFVMLIVYVY.

Belongs to the SMCO4 family.

It localises to the membrane. This Nematostella vectensis (Starlet sea anemone) protein is Single-pass membrane and coiled-coil domain-containing protein 4 homolog.